The following is a 102-amino-acid chain: Large ribosomal subunit protein bL28 (102 aa).

Residues 1–20 (MSNSCDLTGHGWQNGNMVSH) are compositionally biased toward polar residues. The tract at residues 1–27 (MSNSCDLTGHGWQNGNMVSHSNRKTKK) is disordered.

The protein belongs to the bacterial ribosomal protein bL28 family.

The protein is Large ribosomal subunit protein bL28 of Neorickettsia sennetsu (strain ATCC VR-367 / Miyayama) (Ehrlichia sennetsu).